Here is a 262-residue protein sequence, read N- to C-terminus: Thrombin-like enzyme gyroxin B1.4 (262 aa).

Positions Met-1–Ala-18 are cleaved as a signal peptide. Residues Gln-19 to Pro-262 constitute a propeptide that is removed on maturation. Positions Val-25–Ala-253 constitute a Peptidase S1 domain. Intrachain disulfides connect Cys-31–Cys-165, Cys-52–Cys-68, Cys-102–Cys-260, Cys-144–Cys-214, Cys-176–Cys-193, and Cys-204–Cys-229. His-67 serves as the catalytic Charge relay system. An N-linked (GlcNAc...) asparagine glycan is attached at Asn-105. Asp-112 functions as the Charge relay system in the catalytic mechanism. Ser-208 functions as the Charge relay system in the catalytic mechanism.

This sequence belongs to the peptidase S1 family. Snake venom subfamily. As to quaternary structure, monomer. Expressed by the venom gland.

It is found in the secreted. Functionally, thrombin-like snake venom serine protease. Displays a specificity similar to trypsin. Releases only fibrinopeptide A in the conversion of fibrinogen to fibrin. Shows coagulant, esterase and amidase activities. Reversibly increases the permeability of the blood brain barrier (BBB) in mice. Induces the barrel rotation syndrome in mice, which is manifested by gyroxin-like, rapid rolling motions. This syndrome may be due to its effect on BBB permeability, and certainly also to other actions affecting endogenous substrates present in the endothelium, nervous tissues or blood. In Crotalus durissus terrificus (South American rattlesnake), this protein is Thrombin-like enzyme gyroxin B1.4.